The following is an 85-amino-acid chain: MAHKKGQGSTQNNRDSAGRRLGVKKFGGEFVRAGNIIIRQRGTKVHPGSNVGMGTDHTIFALIDGIVKFERKDKERKKVSIYPAS.

The interval 1–21 (MAHKKGQGSTQNNRDSAGRRL) is disordered.

It belongs to the bacterial ribosomal protein bL27 family.

In Wolinella succinogenes (strain ATCC 29543 / DSM 1740 / CCUG 13145 / JCM 31913 / LMG 7466 / NCTC 11488 / FDC 602W) (Vibrio succinogenes), this protein is Large ribosomal subunit protein bL27.